Consider the following 144-residue polypeptide: Large ribosomal subunit protein uL16 (144 aa).

It belongs to the universal ribosomal protein uL16 family. Part of the 50S ribosomal subunit.

Binds 23S rRNA and is also seen to make contacts with the A and possibly P site tRNAs. The protein is Large ribosomal subunit protein uL16 of Heliobacterium modesticaldum (strain ATCC 51547 / Ice1).